The primary structure comprises 116 residues: Large ribosomal subunit protein P2 (116 aa).

Positions 60 to 116 (GKLSSMPSGGGVAAAAGGGGAAAGGGGAAPAAEEKKEEKKEESEEESDDDMGFGLFD) are disordered. Gly residues predominate over residues 67–87 (SGGGVAAAAGGGGAAAGGGGA). The segment covering 91 to 101 (AEEKKEEKKEE) has biased composition (basic and acidic residues).

The protein belongs to the eukaryotic ribosomal protein P1/P2 family. In terms of assembly, P1 and P2 exist as dimers at the large ribosomal subunit. In terms of processing, phosphorylated.

Plays an important role in the elongation step of protein synthesis. This chain is Large ribosomal subunit protein P2, found in Branchiostoma floridae (Florida lancelet).